Here is a 168-residue protein sequence, read N- to C-terminus: Siroheme decarboxylase NirH subunit (168 aa).

It belongs to the Ahb/Nir family. In terms of assembly, probably forms a complex composed of NirD, NirL, NirG and NirH. All proteins are required for the total conversion of siroheme to didecarboxysiroheme.

The enzyme catalyses siroheme + 2 H(+) = 12,18-didecarboxysiroheme + 2 CO2. It functions in the pathway porphyrin-containing compound metabolism. Functionally, involved in heme d1 biosynthesis. Catalyzes the decarboxylation of siroheme into didecarboxysiroheme. The chain is Siroheme decarboxylase NirH subunit from Stutzerimonas stutzeri (Pseudomonas stutzeri).